The following is an 848-amino-acid chain: MSAAAVLAVVAAAVAALAAAASGYELTKNGTVITYDRRSLIIDGHREIFFSGSIHYPRSPPDTWPDLISKAKEGGLNVIESYVFWNGHEPEQGVYNFEGRYDLIKFFKLIQEKEMYAIVRIGPFVQAEWNHGGLPYWLREIPDIIFRTNNEPFKKYMKQFVTLIVNKLKEAKLFASQGGPIILAQIENEYQHLEVAFKEAGTKYINWAAKMAIATNTGVPWIMCKQTKAPGEVIPTCNGRHCGDTWPGPADKKKPLLWTENWTAQYRVFGDPPSQRSAEDIAFSVARFFSVGGTMANYYMYHGGTNFGRNGAAFVMPRYYDEAPLDEFGLYKEPKWGHLRDLHHALRHCKKALLWGNPSVQPLGKLYEARVFEMKEKNVCVAFLSNHNTKEDGTVTFRGQKYFVARRSISILADCKTVVFSTQHVNSQHNQRTFHFADQTVQDNVWEMYSEEKIPRYSKTSIRTQRPLEQYNQTKDKTDYLWYTTSFRLETDDLPYRKEVKPVLEVSSHGHAIVAFVNDAFVGCGHGTKINKAFTMEKAMDLKVGVNHVAILSSTLGLMDSGSYLEHRMAGVYTVTIRGLNTGTLDLTTNGWGHVVGLDGERRRVHSEQGMGAVAWKPGKDNQPLTWYRRRFDPPSGTDPVVIDLTPMGKGFLFVNGEGLGRYWVSYHHALGKPSQYLYHVPRSLLRPKGNTLMFFEEEGGKPDAIMILTVKRDNICTFMTEKNPAHVRWSWESKDSQPKAVAGAGAGAGGLKPTAVLSCPTKKTIQSVVFASYGNPLGICGNYTVGSCHAPRTKEVVEKACIGRKTCSLVVSSEVYGGDVHCPGTTGTLAVQAKCSKRPPRSAATAQ.

Residues 1–23 (MSAAAVLAVVAAAVAALAAAASG) form the signal peptide. N29 carries N-linked (GlcNAc...) asparagine glycosylation. The Proton donor role is filled by E189. E260 serves as the catalytic Nucleophile. Residues N261, N472, and N783 are each glycosylated (N-linked (GlcNAc...) asparagine). Residues 750-837 (GGLKPTAVLS…GTLAVQAKCS (88 aa)) enclose the SUEL-type lectin domain.

It belongs to the glycosyl hydrolase 35 family.

The protein resides in the secreted. Its subcellular location is the extracellular space. It is found in the apoplast. It carries out the reaction Hydrolysis of terminal non-reducing beta-D-galactose residues in beta-D-galactosides.. The chain is Beta-galactosidase 11 from Oryza sativa subsp. japonica (Rice).